A 231-amino-acid polypeptide reads, in one-letter code: Glycerol-3-phosphate acyltransferase (231 aa).

Transmembrane regions (helical) follow at residues 6-26 (FLFL…LVIG), 55-75 (WGIL…TIFL), 95-115 (LTMK…FSLF), 130-150 (IITS…AIFL), 152-172 (LFGY…IFLW), and 196-216 (LFYF…YSNI).

The protein belongs to the PlsY family. Probably interacts with PlsX.

The protein localises to the cell membrane. It catalyses the reaction an acyl phosphate + sn-glycerol 3-phosphate = a 1-acyl-sn-glycero-3-phosphate + phosphate. Its pathway is lipid metabolism; phospholipid metabolism. Functionally, catalyzes the transfer of an acyl group from acyl-phosphate (acyl-PO(4)) to glycerol-3-phosphate (G3P) to form lysophosphatidic acid (LPA). This enzyme utilizes acyl-phosphate as fatty acyl donor, but not acyl-CoA or acyl-ACP. This Aster yellows witches'-broom phytoplasma (strain AYWB) protein is Glycerol-3-phosphate acyltransferase.